Here is a 403-residue protein sequence, read N- to C-terminus: GTPase Obg (403 aa).

Residues 1-159 (MKFIDESLIR…RDLLLELMLL (159 aa)) enclose the Obg domain. Residues 160 to 333 (ADVGMLGFPN…LCRDIMDFII (174 aa)) form the OBG-type G domain. Residues 166–173 (GFPNAGKS), 191–195 (FTTLV), 213–216 (DIPG), 283–286 (NKID), and 314–316 (SAA) each bind GTP. Serine 173 and threonine 193 together coordinate Mg(2+). Residues 364–403 (YQFDDDEDWDDDWTEEDDDEDWDDDWSEEDDEGIEFIYKP) form a disordered region. Acidic residues predominate over residues 365-397 (QFDDDEDWDDDWTEEDDDEDWDDDWSEEDDEGI).

It belongs to the TRAFAC class OBG-HflX-like GTPase superfamily. OBG GTPase family. Monomer. It depends on Mg(2+) as a cofactor.

It localises to the cytoplasm. Its function is as follows. An essential GTPase which binds GTP, GDP and possibly (p)ppGpp with moderate affinity, with high nucleotide exchange rates and a fairly low GTP hydrolysis rate. Plays a role in control of the cell cycle, stress response, ribosome biogenesis and in those bacteria that undergo differentiation, in morphogenesis control. This is GTPase Obg from Haemophilus influenzae (strain PittGG).